Reading from the N-terminus, the 301-residue chain is Putative ribosomal RNA methyltransferase PB17E12.10c (301 aa).

Residues Gly87, Trp89, Asp107, and Asp186 each contribute to the S-adenosyl-L-methionine site. The active-site Proton acceptor is Lys247.

The protein belongs to the class I-like SAM-binding methyltransferase superfamily. RNA methyltransferase RlmE family.

The catalysed reaction is a uridine in rRNA + S-adenosyl-L-methionine = a 2'-O-methyluridine in rRNA + S-adenosyl-L-homocysteine + H(+). The sequence is that of Putative ribosomal RNA methyltransferase PB17E12.10c from Schizosaccharomyces pombe (strain 972 / ATCC 24843) (Fission yeast).